Here is a 427-residue protein sequence, read N- to C-terminus: Peptidase B (427 aa).

Mn(2+) is bound by residues lysine 195 and aspartate 200. Lysine 207 is an active-site residue. The Mn(2+) site is built by aspartate 218, aspartate 277, and glutamate 279. The active site involves arginine 281.

Belongs to the peptidase M17 family. In terms of assembly, homohexamer. Requires Mn(2+) as cofactor.

It is found in the cytoplasm. It carries out the reaction Release of an N-terminal amino acid, Xaa, from a peptide or arylamide. Xaa is preferably Glu or Asp but may be other amino acids, including Leu, Met, His, Cys and Gln.. Functionally, probably plays an important role in intracellular peptide degradation. This Escherichia coli (strain ATCC 8739 / DSM 1576 / NBRC 3972 / NCIMB 8545 / WDCM 00012 / Crooks) protein is Peptidase B.